The following is a 237-amino-acid chain: 7-cyano-7-deazaguanine synthase (237 aa).

14–24 (FSGGQDSATCL) lines the ATP pocket. Residues C202, C217, C220, and C223 each contribute to the Zn(2+) site.

It belongs to the QueC family. The cofactor is Zn(2+).

It catalyses the reaction 7-carboxy-7-deazaguanine + NH4(+) + ATP = 7-cyano-7-deazaguanine + ADP + phosphate + H2O + H(+). Its pathway is purine metabolism; 7-cyano-7-deazaguanine biosynthesis. In terms of biological role, catalyzes the ATP-dependent conversion of 7-carboxy-7-deazaguanine (CDG) to 7-cyano-7-deazaguanine (preQ(0)). The polypeptide is 7-cyano-7-deazaguanine synthase (Rhodopseudomonas palustris (strain TIE-1)).